We begin with the raw amino-acid sequence, 497 residues long: Serine/threonine-protein phosphatase 2A 56 kDa regulatory subunit beta isoform (497 aa).

The span at 1 to 19 (METKLPPASTPTSPSSPGL) shows a compositional bias: low complexity. Disordered regions lie at residues 1-55 (METK…YQSN) and 473-497 (QGTQGAKEAPVPRPTPQVAASGGQS). Phosphoserine is present on residues S32, S35, S44, S46, S47, and S48. Residues 34-45 (RSLRRARPRRSH) show a composition bias toward basic residues.

It belongs to the phosphatase 2A regulatory subunit B56 family. Component of the serine/threonine-protein phosphatase 2A complex (PP2A). This complex consists of a common heterodimeric core enzyme, composed of a 36 kDa catalytic subunit (subunit C) and a 65 kDa constant scaffold subunit (PR65 or subunit A), that associates with a variety of regulatory subunits. Proteins that associate with the core dimer include three families of regulatory subunits B (the R2/B/PR55/B55, R3/B''/PR72/PR130/PR59 and R5/B'/B56 families), the 48 kDa variable regulatory subunit, viral proteins, and cell signaling molecules. Interacts with SGO1. Interacts with AKT1. Post-translationally, ubiquitinated by CUL3-KLHL15 complex; this modification leads to proteasomal degradation. As to expression, widely expressed at the mRNA level, with highest levels in cerebellum and lung.

Its subcellular location is the cytoplasm. As the regulatory component of the serine/threonine-protein phosphatase 2A (PP2A) holoenzyme, modulates substrate specificity, subcellular localization, and responsiveness to phosphorylation. The phosphorylated form mediates the interaction between PP2A and AKT1, leading to AKT1 dephosphorylation. This is Serine/threonine-protein phosphatase 2A 56 kDa regulatory subunit beta isoform (Ppp2r5b) from Rattus norvegicus (Rat).